A 500-amino-acid polypeptide reads, in one-letter code: NAD(P)H-quinone oxidoreductase chain 4, chloroplastic (500 aa).

The next 14 membrane-spanning stretches (helical) occupy residues 4 to 24 (FPWL…IGFL), 37 to 57 (ICIC…HFQL), 87 to 107 (MGPV…AWPV), 113 to 130 (LFHF…GSFS), 134 to 154 (LLLF…LLSL), 167 to 187 (FILY…GMGL), 208 to 228 (ALEI…SPII), 242 to 262 (HYST…YGLV), 272 to 292 (AHSI…IYAA), 305 to 325 (IAYS…SITD), 330 to 350 (GSIL…FLAG), 386 to 406 (LALP…GIIT), 416 to 436 (ILIT…SLSM), and 462 to 482 (LFIL…PDFV).

This sequence belongs to the complex I subunit 4 family.

It localises to the plastid. The protein resides in the chloroplast thylakoid membrane. It carries out the reaction a plastoquinone + NADH + (n+1) H(+)(in) = a plastoquinol + NAD(+) + n H(+)(out). It catalyses the reaction a plastoquinone + NADPH + (n+1) H(+)(in) = a plastoquinol + NADP(+) + n H(+)(out). In Illicium oligandrum (Star anise), this protein is NAD(P)H-quinone oxidoreductase chain 4, chloroplastic.